A 454-amino-acid polypeptide reads, in one-letter code: Serine/threonine-protein phosphatase C23G10.1 (454 aa).

The Mn(2+) site is built by D196, H198, D224, and N256. H257 (proton donor) is an active-site residue. H308 and H382 together coordinate Mn(2+).

It belongs to the PPP phosphatase family. PP-1 subfamily. The cofactor is Mn(2+).

The enzyme catalyses O-phospho-L-seryl-[protein] + H2O = L-seryl-[protein] + phosphate. The catalysed reaction is O-phospho-L-threonyl-[protein] + H2O = L-threonyl-[protein] + phosphate. The protein is Serine/threonine-protein phosphatase C23G10.1 of Caenorhabditis elegans.